A 107-amino-acid chain; its full sequence is MKTNRNRPINILIVFFLLTTARAATRNWTNRTHRTVPKVQHAYYAYPHRSCESFSRPYARSMCIELERIHRSSRQPLFSPPPPPTEIDQRYGVEKRLVPSGPNPLHN.

The first 23 residues, 1-23 (MKTNRNRPINILIVFFLLTTARA), serve as a signal peptide directing secretion. N-linked (GlcNAc...) asparagine glycosylation is found at N27 and N30. Positions 73–107 (SRQPLFSPPPPPTEIDQRYGVEKRLVPSGPNPLHN) are disordered. The span at 87–97 (IDQRYGVEKRL) shows a compositional bias: basic and acidic residues. Hydroxyproline is present on residues P99 and P102. An O-linked (Ara...) hydroxyproline glycan is attached at P102.

It belongs to the CLV3/ESR signal peptide family. Post-translationally, the O-glycosylation (arabinosylation) of the hydroxyproline Pro-102 enhances binding affinity of the CLE10p peptide for its receptor. As to expression, expressed in stems, apex, leaves, flowers, siliques and pollen.

The protein resides in the secreted. Its subcellular location is the extracellular space. Functionally, extracellular signal peptide that regulates cell fate. Represses root apical meristem maintenance. Regulates the transition of protophloem cells from proliferation to differentiation, thus impinging on postembryonic growth capacity of the root meristem; this signaling pathway requires CRN and CLV2. In Arabidopsis thaliana (Mouse-ear cress), this protein is CLAVATA3/ESR (CLE)-related protein 10.